The primary structure comprises 45 residues: NLR family pyrin domain-containing protein 2B (45 aa).

As to expression, expressed in all tissues tested, including spleen, lymph node, thymus, tonsil, peripheral blood leukocyte, bone marrow, liver, heart, brain, placenta, lung, skeletal muscle, kidney and pancreas.

It localises to the cytoplasm. It is found in the nucleus. Functionally, may function as a negative regulator of NF-kappa-B by preventing RELA/p65 phosphorylation at 'Ser-536', thereby inhibiting its transcriptional activity. Through NF-kappa-B regulation may control cytokine release upon Toll-like receptors activation and therefore play a role in modulation of innate immunity. May also play a role in cell cycle progression and apoptotic process. The protein is NLR family pyrin domain-containing protein 2B of Homo sapiens (Human).